Reading from the N-terminus, the 196-residue chain is Secreted phosphoprotein 24 (196 aa).

A signal peptide spans 1-19; sequence MKWCGVLMVALLQSLCCSG. 2 disulfides stabilise this stretch: C83–C94 and C107–C125. Positions 125–196 are disordered; that stretch reads CGQDSSSSES…RGDSFGNHLE (72 aa). Residues 129 to 138 show a composition bias toward low complexity; it reads SSSSESSSEE.

It belongs to the SPP2 family. In terms of processing, multiply phosphorylated at serine residues.

Its subcellular location is the secreted. In terms of biological role, could coordinate an aspect of bone turnover. The chain is Secreted phosphoprotein 24 (spp2) from Salmo salar (Atlantic salmon).